A 244-amino-acid chain; its full sequence is Lipid A 1-phosphatase (244 aa).

6 helical membrane-spanning segments follow: residues 28 to 48, 60 to 80, 98 to 118, 154 to 174, 178 to 198, and 201 to 221; these read LFVTLNAVILSMLLFDAPIGA, ELLTGFGDSAWLIYTSILLFF, ALYVSWIGAYLFFTVVFSGLL, FPSGHSTTVGAFFAAFALLFP, VAFIACAIWLGMTRVMVGAHY, and DVIAGLAFGAWFSLLTAIVFA.

It belongs to the lipid A LpxE 1-phosphatase family.

Its subcellular location is the cell inner membrane. The protein operates within bacterial outer membrane biogenesis; LPS lipid A biosynthesis. Functionally, removes the 1-phosphate group from (tetraacyl) lipid A species, has no requirement for the Kdo(2) moiety of lipid A. Has no 4'-phosphatase activity. Reduces sensitivity of S.meliloti strain 1021 to the cationic antimicrobial peptide (CAMP) polymyxin B. This chain is Lipid A 1-phosphatase, found in Rhizobium johnstonii (strain DSM 114642 / LMG 32736 / 3841) (Rhizobium leguminosarum bv. viciae).